A 183-amino-acid polypeptide reads, in one-letter code: Ribosome maturation factor RimP (183 aa).

The protein belongs to the RimP family.

Its subcellular location is the cytoplasm. Its function is as follows. Required for maturation of 30S ribosomal subunits. This chain is Ribosome maturation factor RimP, found in Leptothrix cholodnii (strain ATCC 51168 / LMG 8142 / SP-6) (Leptothrix discophora (strain SP-6)).